A 63-amino-acid polypeptide reads, in one-letter code: Large ribosomal subunit protein uL30 (63 aa).

This sequence belongs to the universal ribosomal protein uL30 family. Part of the 50S ribosomal subunit.

In Rickettsia felis (strain ATCC VR-1525 / URRWXCal2) (Rickettsia azadi), this protein is Large ribosomal subunit protein uL30.